The sequence spans 498 residues: ATP synthase subunit beta, chloroplastic (498 aa).

172-179 is a binding site for ATP; that stretch reads GGAGVGKT.

Belongs to the ATPase alpha/beta chains family. As to quaternary structure, F-type ATPases have 2 components, CF(1) - the catalytic core - and CF(0) - the membrane proton channel. CF(1) has five subunits: alpha(3), beta(3), gamma(1), delta(1), epsilon(1). CF(0) has four main subunits: a(1), b(1), b'(1) and c(9-12).

It localises to the plastid. The protein resides in the chloroplast thylakoid membrane. It catalyses the reaction ATP + H2O + 4 H(+)(in) = ADP + phosphate + 5 H(+)(out). Produces ATP from ADP in the presence of a proton gradient across the membrane. The catalytic sites are hosted primarily by the beta subunits. This Hyphaene coriacea (Ilala palm) protein is ATP synthase subunit beta, chloroplastic.